The primary structure comprises 737 residues: Protein bicaudal D homolog (737 aa).

3 coiled-coil regions span residues 1–255 (MAES…RNAE), 292–319 (GSSD…EKIF), and 547–684 (AENE…DRDR). A disordered region spans residues 72 to 97 (YRSQHQRSTRSELENEESLLEESSAK). The interval 686–737 (VFKRSSTRAPTRETYQPPRAVRYPGSTTTAQQPAPSSSGGSRGGPRRGDNQQ) is disordered. The span at 710–719 (GSTTTAQQPA) shows a compositional bias: polar residues.

This sequence belongs to the BicD family. As to quaternary structure, component of a dynein-regulating complex composed of at least bicd-1, dlc-1 and egal-1. Interacts with egal-1 and unc-83. Expressed in the excretory cell, body wall muscles, vulval muscle cells, PVD and FLP sensory neurons and AVF interneurons.

The protein resides in the nucleus envelope. Its subcellular location is the perikaryon. It is found in the cell projection. It localises to the dendrite. Its function is as follows. Part of a complex with dlc-1 and egal-1, which is recruited to the nuclear envelope by unc-83, where in turn, it recruits dynein to the nuclear surface and regulates nuclear migration in hypodermal precursor cells. Required for the formation of dendritic branches of PVD sensory neurons. In Caenorhabditis elegans, this protein is Protein bicaudal D homolog.